Reading from the N-terminus, the 385-residue chain is MSLSTIICIGMAGSGKTTFMQRLNSHLRAEKTPPYVINLDPAVLRVPYGANIDIRDSIKYKKVMENYQLGPNGAIVTSLNLFSTKIDQVIRLVEQKKDKFQNCIIDTPGQIECFVWSASGAIITESFASSFPTVIAYIVDTPRNSSPTTFMSNMLYACSILYKTKLPMIVVFNKTDVCKADFAKEWMTDFESFQAAIKEDQDLNGDNGLGSGYMSSLVNSMSLMLEEFYSQLDVVGVSSFTGDGFDEFMQCVDKKVDEYDQYYKQEREKALNLKKKKEEMRKQKSLNGLMKDLGLNEKSSAAASDNDSIDAISDLEEDANDGLVDRDEDEGVEREYTFPGEERTKGEVNENSAPDLQRRYQEAMQQVGKTASSETAENIAKYIRN.

13 to 18 is a GTP binding site; the sequence is GSGKTT. A Gly-Pro-Asn (GPN)-loop; involved in dimer interface motif is present at residues 70 to 72; the sequence is GPN. 173–176 lines the GTP pocket; that stretch reads NKTD. Phosphoserine is present on residues serine 304, serine 308, and serine 313. Positions 317-332 are enriched in acidic residues; sequence EDANDGLVDRDEDEGV. Residues 317-356 are disordered; that stretch reads EDANDGLVDRDEDEGVEREYTFPGEERTKGEVNENSAPDL. The segment covering 333–348 has biased composition (basic and acidic residues); that stretch reads EREYTFPGEERTKGEV. At serine 352 the chain carries Phosphoserine. A Glycyl lysine isopeptide (Lys-Gly) (interchain with G-Cter in ubiquitin) cross-link involves residue lysine 369.

This sequence belongs to the GPN-loop GTPase family. Heterodimers with GPN2 or GPN3. Binds to RNA polymerase II (RNAPII) in a GTP-dependent manner. Interacts with nuclear pore protein NUP133 and nuclear export factor CRM1. Interacts with PCL1. Phosphorylated by the cyclin-CDK PCL1-PHO85.

Its subcellular location is the cytoplasm. Its function is as follows. Small GTPase required for proper nuclear import of RNA polymerase II (RNAPII). May act at an RNAP assembly step prior to nuclear import. Promotes sister chromatid separation during anaphase. The protein is GPN-loop GTPase 1 of Saccharomyces cerevisiae (strain ATCC 204508 / S288c) (Baker's yeast).